A 60-amino-acid chain; its full sequence is UPF0434 protein Dtpsy_1553 (60 aa).

Belongs to the UPF0434 family.

The sequence is that of UPF0434 protein Dtpsy_1553 from Acidovorax ebreus (strain TPSY) (Diaphorobacter sp. (strain TPSY)).